The primary structure comprises 150 residues: Probable antibacterial peptide (150 aa).

A signal peptide spans 1–19 (MHIARFCLLSSMAVLALSA).

The protein localises to the secreted. Its function is as follows. Has antibacterial activity in vitro. The sequence is that of Probable antibacterial peptide from Riptortus clavatus (Bean bug).